Reading from the N-terminus, the 193-residue chain is dCTP deaminase, dUMP-forming (193 aa).

DCTP contacts are provided by residues Lys101 to Arg106, Asp119, Thr127 to Glu129, Gln148, Tyr162, and Gln174. Glu129 functions as the Proton donor/acceptor in the catalytic mechanism. Positions Tyr162–Glu184 are disordered. A compositionally biased stretch (polar residues) spans Thr167–Tyr183.

It belongs to the dCTP deaminase family. As to quaternary structure, homotrimer.

It carries out the reaction dCTP + 2 H2O = dUMP + NH4(+) + diphosphate. Its pathway is pyrimidine metabolism; dUMP biosynthesis; dUMP from dCTP: step 1/1. In terms of biological role, bifunctional enzyme that catalyzes both the deamination of dCTP to dUTP and the hydrolysis of dUTP to dUMP without releasing the toxic dUTP intermediate. This Bifidobacterium longum (strain DJO10A) protein is dCTP deaminase, dUMP-forming.